The primary structure comprises 177 residues: UBA-like domain-containing protein 1 (177 aa).

Residues 89-177 are disordered; that stretch reads ESFHSGGSGS…RAHPAMEAER (89 aa). Residues 112–138 are compositionally biased toward low complexity; the sequence is PHAATSSSAASSWPTAASPPGGPQHHQ. The segment covering 139 to 151 has biased composition (pro residues); it reads PQPPLWTPTPPSP. Residues 167–177 show a composition bias toward basic and acidic residues; it reads PRAHPAMEAER.

The protein belongs to the UBALD family.

The polypeptide is UBA-like domain-containing protein 1 (UBALD1) (Homo sapiens (Human)).